Reading from the N-terminus, the 1170-residue chain is Thrombospondin-1 (1170 aa).

Residues 1–18 (MELLRGLGVLFLLHMCGS) form the signal peptide. The tract at residues 47–95 (RLVKGQDLSSPAFRIENANLIPAVPDDKFQDLLDAVWADKGFIFLASLR) is heparin-binding. The Laminin G-like domain occupies 56 to 270 (SPAFRIENAN…HKTKDLQAIC (215 aa)). A disulfide bridge connects residues Cys171 and Cys232. N-linked (GlcNAc...) asparagine glycosylation is found at Asn248 and Asn360. Residues 316–373 (PLCFHNGVQYKNNEEWTVDSCTECHCQNSVTICKKVSCPIMPCSNATVPDGECCPRCW) enclose the VWFC domain. 3 TSP type-1 domains span residues 379 to 429 (DDGW…QECD), 435 to 490 (DGGW…DACP), and 492 to 547 (NGGW…QDCP). A C-linked (Man) tryptophan glycan is attached at Trp385. Cystine bridges form between Cys391–Cys423, Cys395–Cys428, and Cys406–Cys413. C-linked (Man) tryptophan glycans are attached at residues Trp438 and Trp441. 3 disulfides stabilise this stretch: Cys447–Cys484, Cys451–Cys489, and Cys462–Cys474. The O-linked (Fuc...) threonine glycan is linked to Thr450. A glycan (C-linked (Man) tryptophan) is linked at Trp498. 21 cysteine pairs are disulfide-bonded: Cys504-Cys541, Cys508-Cys546, Cys519-Cys531, Cys551-Cys562, Cys556-Cys572, Cys575-Cys586, Cys592-Cys608, Cys599-Cys617, Cys620-Cys644, Cys650-Cys663, Cys657-Cys676, Cys678-Cys689, Cys705-Cys713, Cys718-Cys738, Cys754-Cys774, Cys777-Cys797, Cys813-Cys833, Cys836-Cys856, Cys874-Cys894, Cys910-Cys930, and Cys946-Cys1167. The O-linked (Fuc...) threonine glycan is linked to Thr507. The interval 531–1152 (CVGDVTENQV…YAGGRLGLFV (622 aa)) is involved in retention in extracellular matrix (ECM); involved in trimer formation. The EGF-like 1 domain occupies 547-587 (PIDGCLSNPCFAGAKCTSYPDGSWKCGACPPGYSGNGIQCK). Ser553 carries O-linked (Xyl) serine glycosylation. The 45-residue stretch at 646-690 (PRNPCTDGTHDCNKNAKCNYLGHYSDPMYRCECKPGYAGNGIICG) folds into the EGF-like 2 domain. 8 TSP type-3 repeats span residues 691-726 (EDTDLDGWPNENLVCVANATYHCKKDNCPNLPNSGQ), 727-762 (EDYDKDGIGDACDDDDDNDKIPDDRDNCPFHYNPAQ), 763-785 (YDYDRDDVGDRCDNCPYNHNPDQ), 786-821 (ADTDKNGEGDACAVDIDGDGILNERDNCQYVYNVDQ), 822-844 (RDTDMDGVGDQCDNCPLEHNPDQ), 845-882 (LDSDSDLIGDTCDNNQDIDEDGHQNNLDNCPYVPNANQ), 883-918 (ADHDKDGKGDACDHDDDNDGIPDDRDNCRLVPNPDQ), and 919-954 (KDSDGDGRGDACKDDFDHDNVPDIDDICPENFDISE). An N-linked (GlcNAc...) asparagine glycan is attached at Asn708. Residues 840 to 934 (HNPDQLDSDS…GRGDACKDDF (95 aa)) form a disordered region. Basic and acidic residues-rich tracts occupy residues 883 to 894 (ADHDKDGKGDAC) and 917 to 934 (DQKDSDGDGRGDACKDDF). The Cell attachment site signature appears at 926 to 928 (RGD). One can recognise a TSP C-terminal domain in the interval 958 to 1170 (RRFQMIPLDP…SDMKYECRDS (213 aa)). A glycan (N-linked (GlcNAc...) asparagine) is linked at Asn1067.

It belongs to the thrombospondin family. As to quaternary structure, homotrimer; disulfide-linked. Can bind to fibrinogen, fibronectin, laminin, type V collagen and integrins alpha-V/beta-1, alpha-V/beta-3 and alpha-IIb/beta-3. Binds heparin. Interacts (via the C-terminal domain) with CD47. Interacts (via the TSP type I repeats) with CD36; the interaction conveys an antiangiogenic effect. Interacts (via the TSP type I repeats) with HRG; the interaction blocks the antiangiogenic effect of THBS1 with CD36. Interacts with ATF6 (via lumenal domain). Interacts with FN1; this interaction is enhanced by TNFAIP6, which may act as a bridging molecule between FN1 and THBS1. Interacts with SIRPA; the interaction stimulates phosphorylation of SIRPA.

Its subcellular location is the secreted. It localises to the cell surface. It is found in the extracellular space. The protein localises to the extracellular matrix. The protein resides in the endoplasmic reticulum. Its subcellular location is the sarcoplasmic reticulum. Functionally, adhesive glycoprotein that mediates cell-to-cell and cell-to-matrix interactions. Multifunctional, involved in inflammation, angiogenesis, wound healing, reactive oxygen species (ROS) signaling, nitrous oxide (NO) signaling, apoptosis, senescence, aging, cellular self-renewal, stemness, and cardiovascular and metabolic homeostasis. Negatively modulates dendritic cell activation and cytokine release, as part of an autocrine feedback loop, contributing to the resolution of inflammation and immune homeostasis. Ligand for receptor CD47. Modulates nitrous oxide (NO) signaling via CD47, hence playing a role as a pressor agent, supporting blood pressure. Plays a role in endothelial cell senescence, acting via CD47, by increasing the abundance and activation of NADPH oxidase NOX1, and so generating excess ROS. Inhibits stem cell self-renewal, acting via CD47 signaling, probably by regulation of the stem cell transcription factors POU5F1/OCT4, SOX2, MYC/c-Myc and KLF4. Negatively modulates wound healing, acting via CD47. Ligand for receptor CD36. Involved in inducing apoptosis in podocytes in response to elevated free fatty acids, acting via CD36. Plays a role in suppressing angiogenesis, acting, depending on context, via CD36 or CD47. Promotes cellular senescence in a TP53-CDKN1A-RB1 signaling-dependent manner. Ligand for immunoglobulin-like cell surface receptor SIRPA. Involved in ROS signaling in non-phagocytic cells, stimulating NADPH oxidase-derived ROS production, acting via interaction with SIRPA. Plays a role in metabolic dysfunction in diet-induced obesity, perhaps acting by exacerbating adipose inflammatory activity; its effects may be mediated, at least in part, through enhanced adipocyte proliferation. Plays a role in ER stress response, via its interaction with the activating transcription factor 6 alpha (ATF6) which produces adaptive ER stress response factors. May be involved in age-related conditions, including metabolic dysregulation, during normal aging. This chain is Thrombospondin-1 (Thbs1), found in Mus musculus (Mouse).